The primary structure comprises 240 residues: Ribonuclease HII (240 aa).

In terms of domain architecture, RNase H type-2 spans 31-222 (RLIAGVDEAG…VRRALGLETA (192 aa)). 3 residues coordinate a divalent metal cation: D37, E38, and D130.

It belongs to the RNase HII family. Mn(2+) serves as cofactor. Mg(2+) is required as a cofactor.

It localises to the cytoplasm. It carries out the reaction Endonucleolytic cleavage to 5'-phosphomonoester.. Endonuclease that specifically degrades the RNA of RNA-DNA hybrids. The sequence is that of Ribonuclease HII from Xanthomonas campestris pv. campestris (strain B100).